We begin with the raw amino-acid sequence, 156 residues long: METMIINQQNKINYTKEMQQVILNVANAVAKMVKLSPNTELSVMIVDNSYIKELNLIYRGENNPTDVLSFAMNELSEEEMDLDLPGEVNVLGDIVVSLEKAVSQSEEYGHSAERELGYLIAHGMLHLLGYDHENEEERNLMRNLEERIMHKVKLER.

The Zn(2+) site is built by His122, His126, and His132.

It belongs to the endoribonuclease YbeY family. It depends on Zn(2+) as a cofactor.

It localises to the cytoplasm. Single strand-specific metallo-endoribonuclease involved in late-stage 70S ribosome quality control and in maturation of the 3' terminus of the 16S rRNA. This chain is Endoribonuclease YbeY, found in Syntrophomonas wolfei subsp. wolfei (strain DSM 2245B / Goettingen).